A 233-amino-acid chain; its full sequence is Orotidine 5'-phosphate decarboxylase (233 aa).

Substrate is bound by residues Asp11, Lys34, 61–70 (DLKLHDIPNT), Thr117, Arg179, Gln188, Gly208, and Arg209. The active-site Proton donor is the Lys63.

This sequence belongs to the OMP decarboxylase family. Type 1 subfamily. As to quaternary structure, homodimer.

It carries out the reaction orotidine 5'-phosphate + H(+) = UMP + CO2. Its pathway is pyrimidine metabolism; UMP biosynthesis via de novo pathway; UMP from orotate: step 2/2. Catalyzes the decarboxylation of orotidine 5'-monophosphate (OMP) to uridine 5'-monophosphate (UMP). The sequence is that of Orotidine 5'-phosphate decarboxylase from Streptococcus pneumoniae (strain Hungary19A-6).